The chain runs to 589 residues: Aspartate--tRNA ligase 2 (589 aa).

Glu-174 serves as a coordination point for L-aspartate. Residues 198 to 201 form an aspartate region; it reads QITK. Arg-220 contacts L-aspartate. Residues 220 to 222 and Gln-229 contribute to the ATP site; that span reads RDE. His-443 is an L-aspartate binding site. An ATP-binding site is contributed by Glu-477. Arg-484 contributes to the L-aspartate binding site. 529 to 532 provides a ligand contact to ATP; the sequence is GLDR.

The protein belongs to the class-II aminoacyl-tRNA synthetase family. Type 1 subfamily. As to quaternary structure, homodimer.

It localises to the cytoplasm. The enzyme catalyses tRNA(Asp) + L-aspartate + ATP = L-aspartyl-tRNA(Asp) + AMP + diphosphate. In terms of biological role, catalyzes the attachment of L-aspartate to tRNA(Asp) in a two-step reaction: L-aspartate is first activated by ATP to form Asp-AMP and then transferred to the acceptor end of tRNA(Asp). The sequence is that of Aspartate--tRNA ligase 2 from Streptococcus mutans serotype c (strain ATCC 700610 / UA159).